The sequence spans 102 residues: NADH-quinone oxidoreductase subunit K (102 aa).

3 helical membrane passes run 6-26 (LEHGLALASVLFALGLVGLMV), 30-50 (ILFVLMSLEVMMNAAALAFVV), and 62-82 (VMFILVLSLAAAEASIGLAIL).

The protein belongs to the complex I subunit 4L family. In terms of assembly, NDH-1 is composed of 13 different subunits. Subunits NuoA, H, J, K, L, M, N constitute the membrane sector of the complex.

The protein localises to the cell inner membrane. It carries out the reaction a quinone + NADH + 5 H(+)(in) = a quinol + NAD(+) + 4 H(+)(out). In terms of biological role, NDH-1 shuttles electrons from NADH, via FMN and iron-sulfur (Fe-S) centers, to quinones in the respiratory chain. The immediate electron acceptor for the enzyme in this species is believed to be ubiquinone. Couples the redox reaction to proton translocation (for every two electrons transferred, four hydrogen ions are translocated across the cytoplasmic membrane), and thus conserves the redox energy in a proton gradient. The protein is NADH-quinone oxidoreductase subunit K of Pseudomonas aeruginosa (strain LESB58).